The primary structure comprises 238 residues: Ribosomal RNA small subunit methyltransferase G (238 aa).

Residues G77, F82, 128–129 (AE), and R147 each bind S-adenosyl-L-methionine. The disordered stretch occupies residues 219 to 238 (RQTPKKYPRKAGLPNKEPIE).

Belongs to the methyltransferase superfamily. RNA methyltransferase RsmG family.

The protein resides in the cytoplasm. In terms of biological role, specifically methylates the N7 position of guanine in position 535 of 16S rRNA. In Oceanobacillus iheyensis (strain DSM 14371 / CIP 107618 / JCM 11309 / KCTC 3954 / HTE831), this protein is Ribosomal RNA small subunit methyltransferase G.